A 327-amino-acid chain; its full sequence is Microtubule-associated protein RP/EB family member 2 (327 aa).

Residues 1-17 (MPGPTQTLSPNGENNND) show a composition bias toward polar residues. The disordered stretch occupies residues 1 to 20 (MPGPTQTLSPNGENNNDVIH). Residues 56 to 158 (TMSRHDIIAW…FIQWFKKFFD (103 aa)) form the Calponin-homology (CH) domain. Disordered stretches follow at residues 170–238 (EARQ…DKDL) and 295–327 (LYSS…QEEY). Residues 234–304 (SDKDLETQVS…LYSSEEQESH (71 aa)) enclose the EB1 C-terminal domain.

The protein belongs to the MAPRE family.

The protein resides in the cytoplasm. The protein localises to the cytoskeleton. Functionally, may be involved in microtubule polymerization, and spindle function by stabilizing microtubules and anchoring them at centrosomes. The chain is Microtubule-associated protein RP/EB family member 2 (mapre2) from Xenopus laevis (African clawed frog).